The sequence spans 400 residues: Enoyl-[acyl-carrier-protein] reductase [NADH] 1 (400 aa).

Residues G48–Y53, F74–E75, D111–A112, and L139–A140 each bind NAD(+). Y225 is a binding site for substrate. Residue Y235 is the Proton donor of the active site. Residues K244 and V273–T275 contribute to the NAD(+) site.

Belongs to the TER reductase family. Monomer.

The catalysed reaction is a 2,3-saturated acyl-[ACP] + NAD(+) = a (2E)-enoyl-[ACP] + NADH + H(+). It functions in the pathway lipid metabolism; fatty acid biosynthesis. Involved in the final reduction of the elongation cycle of fatty acid synthesis (FAS II). Catalyzes the reduction of a carbon-carbon double bond in an enoyl moiety that is covalently linked to an acyl carrier protein (ACP). This Vibrio vulnificus (strain CMCP6) protein is Enoyl-[acyl-carrier-protein] reductase [NADH] 1.